A 132-amino-acid chain; its full sequence is Small ribosomal subunit protein uS11 (132 aa).

It belongs to the universal ribosomal protein uS11 family. Part of the 30S ribosomal subunit. Interacts with proteins S7 and S18. Binds to IF-3.

Located on the platform of the 30S subunit, it bridges several disparate RNA helices of the 16S rRNA. Forms part of the Shine-Dalgarno cleft in the 70S ribosome. The chain is Small ribosomal subunit protein uS11 from Legionella pneumophila (strain Paris).